A 539-amino-acid chain; its full sequence is Propionyl-CoA carboxylase beta chain, mitochondrial (539 aa).

The transit peptide at Met-1–Leu-28 directs the protein to the mitochondrion. Residues Ala-32–Glu-290 form the CoA carboxyltransferase N-terminal domain. The segment at Ala-32–Lys-533 is carboxyltransferase. Phosphoserine is present on Ser-71. Lys-99 is modified (N6-acetyllysine; alternate). Residue Lys-99 is modified to N6-succinyllysine; alternate. Lys-248 is modified (N6-succinyllysine). A CoA carboxyltransferase C-terminal domain is found at Pro-294–Lys-533. Residues Asp-325–Gln-358 are acyl-CoA binding. 2 positions are modified to N6-acetyllysine; alternate: Lys-474 and Lys-489. N6-succinyllysine; alternate occurs at positions 474 and 489.

This sequence belongs to the AccD/PCCB family. In terms of assembly, the holoenzyme is a dodecamer composed of 6 PCCA/alpha subunits and 6 PCCB/beta subunits.

Its subcellular location is the mitochondrion matrix. It catalyses the reaction propanoyl-CoA + hydrogencarbonate + ATP = (S)-methylmalonyl-CoA + ADP + phosphate + H(+). The enzyme catalyses butanoyl-CoA + hydrogencarbonate + ATP = (2S)-ethylmalonyl-CoA + ADP + phosphate + H(+). Its pathway is metabolic intermediate metabolism; propanoyl-CoA degradation; succinyl-CoA from propanoyl-CoA: step 1/3. Functionally, this is one of the 2 subunits of the biotin-dependent propionyl-CoA carboxylase (PCC), a mitochondrial enzyme involved in the catabolism of odd chain fatty acids, branched-chain amino acids isoleucine, threonine, methionine, and valine and other metabolites. Propionyl-CoA carboxylase catalyzes the carboxylation of propionyl-CoA/propanoyl-CoA to D-methylmalonyl-CoA/(S)-methylmalonyl-CoA. Within the holoenzyme, the alpha subunit catalyzes the ATP-dependent carboxylation of the biotin carried by the biotin carboxyl carrier (BCC) domain, while the beta subunit then transfers the carboxyl group from carboxylated biotin to propionyl-CoA. Propionyl-CoA carboxylase also significantly acts on butyryl-CoA/butanoyl-CoA, which is converted to ethylmalonyl-CoA/(2S)-ethylmalonyl-CoA at a much lower rate. Other alternative minor substrates include (2E)-butenoyl-CoA/crotonoyl-CoA. This is Propionyl-CoA carboxylase beta chain, mitochondrial from Homo sapiens (Human).